Here is a 381-residue protein sequence, read N- to C-terminus: MQTLLFYFFFINLIFAHDLNVKTYKPCTIPSVFSEQFTSEDITTWRSRWRAPVNKDLGVWDLVEAPGSHLRDEYGLITLKSNKPHILISNLENPTTRQSSSVPIVLSFQVKPTKPWTCGHAYVSLVHQSNPKNVSKEPPSVIRFGVKKCGMFDYISLSIISYDGKVSCHLYDAPPSGLVEGRTSMYTLLLQNTTVVIRRDQSVVYTGDVGTNFFHSPTKWITHSNVSNGYYTSRNIMSFLLSNNTNTSSYPFSVNGVELDVWNENAGVFINNIYFGFSLSDAMKFENETFIAKKILENSPCPNQPSIQPFGILMMLVSTIYGNFKNLYNCIKRNTIGYIYNSIYDFWITEGMLFPMRNMDIFKITAISIGLSIPVFLWLLK.

Positions 1–16 (MQTLLFYFFFINLIFA) are cleaved as a signal peptide. Topologically, residues 17 to 303 (HDLNVKTYKP…KILENSPCPN (287 aa)) are lumenal. An intrachain disulfide couples C118 to C149. 6 N-linked (GlcNAc...) asparagine glycosylation sites follow: N133, N192, N225, N243, N246, and N287. The helical transmembrane segment at 304 to 324 (QPSIQPFGILMMLVSTIYGNF) threads the bilayer. The Cytoplasmic portion of the chain corresponds to 325 to 359 (KNLYNCIKRNTIGYIYNSIYDFWITEGMLFPMRNM). A helical membrane pass occupies residues 360–380 (DIFKITAISIGLSIPVFLWLL). A topological domain (lumenal) is located at residue K381.

This sequence belongs to the calreticulin family.

It is found in the endoplasmic reticulum membrane. This is an uncharacterized protein from Schizosaccharomyces pombe (strain 972 / ATCC 24843) (Fission yeast).